Here is a 381-residue protein sequence, read N- to C-terminus: Chymosin (381 aa).

Residues M1–G16 form the signal peptide. A propeptide spans A17–F58 (activation peptide). In terms of domain architecture, Peptidase A1 spans Y74–A378. The active site involves D92. Disulfide bonds link C105/C110 and C265/C269. D274 is a catalytic residue. C308 and C341 form a disulfide bridge.

The protein belongs to the peptidase A1 family. Monomer.

It catalyses the reaction Broad specificity similar to that of pepsin A. Clots milk by cleavage of a single 104-Ser-Phe-|-Met-Ala-107 bond in kappa-chain of casein.. In terms of biological role, chymosin is synthesized in the mucosa of the stomach. The enzyme hydrolyzes casein to paracasein. This Ovis aries (Sheep) protein is Chymosin (CYM).